A 618-amino-acid polypeptide reads, in one-letter code: 1-deoxy-D-xylulose-5-phosphate synthase (618 aa).

Residues His76 and 117–119 (GHS) each bind thiamine diphosphate. Asp148 is a binding site for Mg(2+). Residues 149-150 (GA), Asn177, Tyr284, and Glu366 contribute to the thiamine diphosphate site. Asn177 contributes to the Mg(2+) binding site.

It belongs to the transketolase family. DXPS subfamily. In terms of assembly, homodimer. It depends on Mg(2+) as a cofactor. The cofactor is thiamine diphosphate.

It catalyses the reaction D-glyceraldehyde 3-phosphate + pyruvate + H(+) = 1-deoxy-D-xylulose 5-phosphate + CO2. Its pathway is metabolic intermediate biosynthesis; 1-deoxy-D-xylulose 5-phosphate biosynthesis; 1-deoxy-D-xylulose 5-phosphate from D-glyceraldehyde 3-phosphate and pyruvate: step 1/1. Functionally, catalyzes the acyloin condensation reaction between C atoms 2 and 3 of pyruvate and glyceraldehyde 3-phosphate to yield 1-deoxy-D-xylulose-5-phosphate (DXP). The chain is 1-deoxy-D-xylulose-5-phosphate synthase from Dechloromonas aromatica (strain RCB).